We begin with the raw amino-acid sequence, 870 residues long: Probable coatomer subunit gamma (870 aa).

6 HEAT repeats span residues 60-97, 99-133, 168-205, 278-315, 316-350, and 389-425; these read TEATEAFFGVTKLWQSKDVSLRRMVYLAVKELAEVSDD, IIVTSSLTKDMTGREDLYRAAAIRALCKITDTGML, EVVRRWANEVQEAVSSDNHMVQYHALALLYQIRANDRL, SEIQPAITALQMCCTSPKAAVRFAAVRTLNKVAMAHPN, AVMSCNVDLEKFITDPNRSIATLAITTLLKTGAES, and HTVMMPFLAKMLRSDGSYDYKKAIVETIIAIIEENPD.

The protein belongs to the COPG family. As to quaternary structure, oligomeric complex that consists of at least the alpha, beta, beta', gamma, delta, epsilon and zeta subunits.

Its subcellular location is the cytoplasm. The protein resides in the golgi apparatus membrane. It is found in the cytoplasmic vesicle. The protein localises to the COPI-coated vesicle membrane. The coatomer is a cytosolic protein complex that binds to dilysine motifs and reversibly associates with Golgi non-clathrin-coated vesicles, which further mediate biosynthetic protein transport from the ER, via the Golgi up to the trans Golgi network. Coatomer complex is required for budding from Golgi membranes, and is essential for the retrograde Golgi-to-ER transport of dilysine-tagged proteins. The protein is Probable coatomer subunit gamma of Caenorhabditis elegans.